A 455-amino-acid chain; its full sequence is N(5)-hydroxyornithine:cis-anhydromevalonyl coenzyme A-N(5)-transacylase SIDF (455 aa).

Positions 453–455 (PKL) match the PTS1-type peroxisomal targeting signal motif.

Belongs to the lysine N-acyltransferase mbtK family.

Its subcellular location is the peroxisome. It participates in siderophore biosynthesis. In terms of biological role, hydroxyornithine transacylase; part of the gene cluster that mediates the biosynthesis of at least 11 siderophores, including beauverichelin A, dimerumic acid (DA), Na-dimethyl coprogen (NADC), eleutherazine B, ferricrocin (FC), fusarinine A, fusarinine C (FsC), metachelin A, mevalonolactone, rhodotorulic acid (RA) and tenellin. This cocktail of siderophores for iron metabolism is essential for virulence, and more specifically for the fungal virulence in penetrating through the host cuticle. Siderophore synthesis is also involved in conidial germination under iron-deficient conditions. For biosynthesis of fusarinine C, the transacylase SIDF transfers anhydromevalonyl to N(5)-hydroxyornithine. The required anhydromevalonyl-CoA moiety is derived from mevalonate by CoA ligation and dehydration catalyzed by SIDI and sidH respectively. This is N(5)-hydroxyornithine:cis-anhydromevalonyl coenzyme A-N(5)-transacylase SIDF from Beauveria bassiana (strain ARSEF 2860) (White muscardine disease fungus).